The sequence spans 92 residues: Large ribosomal subunit protein eL43 (92 aa).

Residues 39 to 60 (CEFCGKYAVKRKAVGIWGCKAC) form a C4-type zinc finger.

It belongs to the eukaryotic ribosomal protein eL43 family.

This chain is Large ribosomal subunit protein eL43 (RPL37A), found in Gossypium hirsutum (Upland cotton).